A 321-amino-acid chain; its full sequence is Ribose-phosphate pyrophosphokinase 1 (321 aa).

Mg(2+) is bound by residues Asp131, His133, Asp142, and Asp146.

The protein belongs to the ribose-phosphate pyrophosphokinase family.

The enzyme catalyses D-ribose 5-phosphate + ATP = 5-phospho-alpha-D-ribose 1-diphosphate + AMP + H(+). This chain is Ribose-phosphate pyrophosphokinase 1 (PRS1), found in Candida albicans (Yeast).